A 254-amino-acid chain; its full sequence is uncharacterized protein (254 aa).

This is an uncharacterized protein from Acidianus filamentous virus 2 (isolate Italy/Pozzuoli) (AFV-2).